The primary structure comprises 506 residues: Gallate 1-beta-glucosyltransferase 84A23 (506 aa).

The active-site Proton acceptor is histidine 20. An anthocyanidin is bound at residue histidine 20. UDP-alpha-D-glucose contacts are provided by glutamine 345, histidine 360, tryptophan 363, asparagine 364, serine 365, and glutamate 368. Residue glycine 383 participates in an anthocyanidin binding. The UDP-alpha-D-glucose site is built by aspartate 384 and glutamine 385.

This sequence belongs to the UDP-glycosyltransferase family. Expressed in roots of the seedlings.

It localises to the cytoplasm. It catalyses the reaction 3,4,5-trihydroxybenzoate + UDP-alpha-D-glucose = 1-O-galloyl-beta-D-glucose + UDP. The enzyme catalyses 3,4-dihydroxybenzoate + UDP-alpha-D-glucose = 1-O-(3,4-dihydroxy-benzoyl)-beta-D-glucose + UDP. It carries out the reaction 4-hydroxybenzoate + UDP-alpha-D-glucose = 4-(beta-D-glucosyloxy)benzoate + UDP + H(+). The catalysed reaction is (E)-cinnamate + UDP-alpha-D-glucose = 1-O-(trans-cinnamoyl)-beta-D-glucose + UDP. It catalyses the reaction (E)-sinapate + UDP-alpha-D-glucose = 1-O-(trans-sinapoyl)-beta-D-glucose + UDP. The enzyme catalyses (E)-4-coumarate + UDP-alpha-D-glucose = 1-O-(trans-4-coumaroyl)-beta-D-glucose + UDP. It carries out the reaction (E)-caffeate + UDP-alpha-D-glucose = 1-O-[(E)-caffeoyl]-beta-D-glucose + UDP. The catalysed reaction is (E)-ferulate + UDP-alpha-D-glucose = 1-O-[(E)-feruloyl]-beta-D-glucose + UDP. It catalyses the reaction genistein + UDP-alpha-D-glucose = genistein 7-O-beta-D-glucoside + UDP + H(+). The enzyme catalyses apigenin + UDP-alpha-D-glucose = apigenin 7-O-beta-D-glucoside + UDP + H(+). It carries out the reaction luteolin + UDP-alpha-D-glucose = luteolin 7-O-beta-D-glucoside + UDP + H(+). Glucosyltransferase that catalyzes the formation of 1-O-beta-D-glucose esters with hydroxybenzoic acids and cinnamic acid including its derivatives as preferred glucosyl acceptors. Has significant activity with gallic acid (3,4,5-trihydroxybenzoic acid), 3,4-dihydroxybenzoic acid, 4-hydroxybenzoic acid, cinnamic acid, sinapic acid, coumaric acid, caffeic acid and ferulic acid in vitro. Gallic acid is the predicted native substrate of the enzyme, which thus catalyzes the formation of 1-O-galloyl-beta-D-glucose, the first committed step of hydrolyzable tannins (HTs) biosynthesis, with punicalagin isomers being the major HTs of pomegranate. Catalyzes the formation of flavonoid glucosides with genistein, apigenin and luteolin in vitro. Has low activity with benzoic acid, 2-hydroxybenzoic acid, 3-hydroxybenzoic acid, 2,4-dihydroxybenzoic acid, naringenin and quercetin. No activity with catechol, resveratrol, chlorogenic acid, catechin and epicatechin (building blocks of proanthocyanidins) or cyanidin, delphinidin and pelargonidin (the three anthocyanidins). This Punica granatum (Pomegranate) protein is Gallate 1-beta-glucosyltransferase 84A23.